Consider the following 177-residue polypeptide: MDLLGPIHDILLVSLGSGIILGSLGVVLLTNPIYSAFSSGLVLVRISLFHILSNSYFVAAAQLLIYVGAINVLIIFAVMFMNGSEYYNNFHLWTVGDGISSVVCTSILFSLIATILDTSWYGIIWTTRSNQIIEQDLTSNVQQIGIHLSTDFFLPFELISIILLVALVGAIAMARAE.

The next 5 helical transmembrane spans lie at 10–30 (ILLVSLGSGIILGSLGVVLLT), 32–52 (PIYSAFSSGLVLVRISLFHIL), 61–81 (AQLLIYVGAINVLIIFAVMFM), 93–115 (WTVGDGISSVVCTSILFSLIATI), and 152–172 (FFLPFELISIILLVALVGAIA).

This sequence belongs to the complex I subunit 6 family. NDH is composed of at least 16 different subunits, 5 of which are encoded in the nucleus.

The protein resides in the plastid. Its subcellular location is the chloroplast thylakoid membrane. The enzyme catalyses a plastoquinone + NADH + (n+1) H(+)(in) = a plastoquinol + NAD(+) + n H(+)(out). The catalysed reaction is a plastoquinone + NADPH + (n+1) H(+)(in) = a plastoquinol + NADP(+) + n H(+)(out). Its function is as follows. NDH shuttles electrons from NAD(P)H:plastoquinone, via FMN and iron-sulfur (Fe-S) centers, to quinones in the photosynthetic chain and possibly in a chloroplast respiratory chain. The immediate electron acceptor for the enzyme in this species is believed to be plastoquinone. Couples the redox reaction to proton translocation, and thus conserves the redox energy in a proton gradient. This Amborella trichopoda protein is NAD(P)H-quinone oxidoreductase subunit 6, chloroplastic (ndhG).